The following is a 423-amino-acid chain: Lysosomal acid phosphatase (423 aa).

The first 30 residues, 1-30 (MAGKRSGWSRAALLQLLLGVNLVVMPPTQA), serve as a signal peptide directing secretion. Topologically, residues 31–380 (RSLRFVTLLY…QVASGPADTE (350 aa)) are lumenal. Histidine 42 acts as the Nucleophile in catalysis. Asparagine 92, asparagine 133, asparagine 167, asparagine 177, asparagine 191, and asparagine 267 each carry an N-linked (GlcNAc...) asparagine glycan. Cystine bridges form between cysteine 159-cysteine 370, cysteine 212-cysteine 310, and cysteine 345-cysteine 349. Aspartate 287 serves as the catalytic Proton donor. Residues asparagine 322 and asparagine 331 are each glycosylated (N-linked (GlcNAc...) asparagine). Residues 381–401 (VIVALAVCGSILFLLIVLLLT) form a helical membrane-spanning segment. Topologically, residues 402–423 (VLFRMQAQPPGYRHVADGEDHA) are cytoplasmic.

Belongs to the histidine acid phosphatase family. In terms of processing, the membrane-bound form is converted to the soluble form by sequential proteolytic processing. First, the C-terminal cytoplasmic tail is removed. Cleavage by a lysosomal protease releases the soluble form in the lysosome lumen.

Its subcellular location is the lysosome membrane. The protein localises to the lysosome lumen. It carries out the reaction a phosphate monoester + H2O = an alcohol + phosphate. The protein is Lysosomal acid phosphatase (ACP2) of Pongo abelii (Sumatran orangutan).